A 110-amino-acid polypeptide reads, in one-letter code: UPF0060 membrane protein MT2717 (110 aa).

4 helical membrane-spanning segments follow: residues 6 to 26 (ILLF…VWQG), 32 to 52 (GWLW…FATL), 61 to 81 (VLAA…MALD), and 90 to 110 (VIGA…PRGH).

The protein belongs to the UPF0060 family.

It is found in the cell membrane. This chain is UPF0060 membrane protein MT2717, found in Mycobacterium tuberculosis (strain CDC 1551 / Oshkosh).